We begin with the raw amino-acid sequence, 572 residues long: Putative inorganic phosphate transporter C8E4.01c (572 aa).

The Cytoplasmic segment spans residues 1–47 (MAFGSKILNIGSKSDEYNDDAVPLDQVEEGAQERRYYLGLTKREFKL). 2 positions are modified to phosphoserine: S12 and S14. Residues 48–68 (MMLAGVGFFLDSYDLFIINLV) traverse the membrane as a helical segment. The Extracellular segment spans residues 69-99 (TPIFEYLYWGGIEKGPTGKGHYPSGIRGLVN). The chain crosses the membrane as a helical span at residues 100–120 (ASANIGNIFGQLLFGFMGDFF). The Cytoplasmic portion of the chain corresponds to 121-123 (GRK). Residues 124-144 (FVYGKEMVIVIIATVLVIAMP) form a helical membrane-spanning segment. Residues 145–153 (KSIHSPLSK) lie on the Extracellular side of the membrane. Residues 154 to 174 (MMWVFCWRWLLGVGIGGDYPM) form a helical membrane-spanning segment. Residues 175-193 (SAAITSERSKIKRRGTLIS) lie on the Cytoplasmic side of the membrane. A helical membrane pass occupies residues 194–214 (LIFAFQGFGTLAGAIVTIILL). At 215–229 (GCFEHPLNREGHYHK) the chain is on the extracellular side. The chain crosses the membrane as a helical span at residues 230 to 250 (LEGVWRLQFGLALVPAIGVLI). Topologically, residues 251–346 (PRLIMKESKS…TYFRQWRHFK (96 aa)) are cytoplasmic. Residues 265–297 (KALNSAEGKDPKAFFNTDDEDNMKKSSSHGDSE) form a disordered region. The segment covering 286-296 (NMKKSSSHGDS) has biased composition (basic and acidic residues). A phosphoserine mark is found at S292 and S296. Residues 347-367 (HLLGTSVCWFLLDIAFYGVNL) form a helical membrane-spanning segment. Topologically, residues 368 to 395 (NQSVILKNIGFSTGTNEYRTLMKNAIGN) are extracellular. Residues 396-416 (LIIAVAGYVPGYWFNVFLVEI) form a helical membrane-spanning segment. Over 417–420 (LGRK) the chain is Cytoplasmic. A helical membrane pass occupies residues 421-441 (WIQLQGFVITGLMFAILAGRW). Over 442–449 (NEISTGGR) the chain is Extracellular. The helical transmembrane segment at 450–470 (FACFVIAQLFSNFGPNSTTFI) threads the bilayer. Residues 471–485 (YPAEVFPARVRGTAH) lie on the Cytoplasmic side of the membrane. Residues 486 to 506 (GVSAALGKCGAILASLLFNFL) traverse the membrane as a helical segment. The Extracellular portion of the chain corresponds to 507-508 (TG). The helical transmembrane segment at 509-529 (VIGYGNVMWIFCGCMWGGILF) threads the bilayer. Topologically, residues 530-572 (TLLLPETKGRDADEIDRLELFYGKDGKVQCDSKWKSWYFNGIF) are cytoplasmic.

It belongs to the major facilitator superfamily. Sugar transporter (TC 2.A.1.1) family.

The protein localises to the membrane. In terms of biological role, high-affinity transporter for external inorganic phosphate. This is Putative inorganic phosphate transporter C8E4.01c from Schizosaccharomyces pombe (strain 972 / ATCC 24843) (Fission yeast).